The following is a 248-amino-acid chain: Peroxisomal membrane protein 11A (248 aa).

The Cytoplasmic segment spans residues 1 to 97; sequence MATKAPEKIT…RSSRWDSNHE (97 aa). The helical transmembrane segment at 98–118 threads the bilayer; the sequence is LVLLIIAYGGEGLYYFVEQFI. Over 119–220 the chain is Lumenal; sequence WLTKSGLIDA…MTIADIRDGK (102 aa). The chain crosses the membrane as a helical span at residues 221-241; sequence GVLSAPNVISSAGLFSAIVST. Residues 242–248 are Cytoplasmic-facing; it reads HKNWISC.

It belongs to the peroxin-11 family. As to quaternary structure, homooligomer. Interacts with ARC5 and FIS1B on peroxisomes. In terms of tissue distribution, expressed in developing siliques.

It is found in the peroxisome membrane. Its function is as follows. Involved in peroxisomal proliferation. Promotes peroxisomal duplication, aggregation or elongation without fission. This chain is Peroxisomal membrane protein 11A (PEX11A), found in Arabidopsis thaliana (Mouse-ear cress).